The chain runs to 371 residues: Enoyl-[acyl-carrier-protein] reductase [NADH] 2, chloroplastic (371 aa).

The transit peptide at Met-1–Arg-67 directs the protein to the chloroplast. Residues Gly-87, Tyr-94, Asp-151–Ala-152, Ser-198–Leu-199, and Leu-248 contribute to the NAD(+) site. Active-site proton acceptor residues include Tyr-250 and Tyr-260. Residues Lys-268 and Leu-298–Ala-302 each bind NAD(+).

The protein belongs to the short-chain dehydrogenases/reductases (SDR) family. FabI subfamily. Homotetramer.

Its subcellular location is the plastid. It localises to the chloroplast. The catalysed reaction is a 2,3-saturated acyl-[ACP] + NAD(+) = a (2E)-enoyl-[ACP] + NADH + H(+). Its pathway is lipid metabolism; fatty acid biosynthesis. In terms of biological role, catalyzes the NAD-dependent reduction of a carbon-carbon double bond in an enoyl moiety that is covalently linked to an acyl carrier protein (ACP). Catalyzes the last reduction step in the de novo synthesis cycle of fatty acids. Involved in the elongation cycle of fatty acids which are used in lipid metabolism. Required for normal plant growth. The protein is Enoyl-[acyl-carrier-protein] reductase [NADH] 2, chloroplastic of Oryza sativa subsp. japonica (Rice).